The sequence spans 149 residues: Protein FAM72A (149 aa).

This sequence belongs to the FAM72 family. Interacts with UNG. Expressed at high levels in stomach and also in kidney and, at low levels, in heart (at protein level). In the stomach, highly expressed in foveolar cells, parietal cells and chief cells (at protein level). In kidney, expressed in endothelial cells, mesangial and epithelial cells (parietal and visceral epithelium) around glomerulus (at protein level).

The protein localises to the cytoplasm. It localises to the mitochondrion. May play a role in the regulation of cellular reactive oxygen species metabolism. May participate in cell growth regulation. The protein is Protein FAM72A (FAM72A) of Bos taurus (Bovine).